Reading from the N-terminus, the 832-residue chain is Serine/threonine-protein kinase Doa (832 aa).

4 disordered regions span residues 1–86 (MVAA…SKYI), 135–158 (LLQHQQQQHHQQQQQQHQEQQQYP), 179–215 (SDPFMQQQHMPAHQQQQHLPHKLQQSYSSSHVPKQAP), and 258–419 (SKIG…QLQQ). A compositionally biased stretch (polar residues) spans 8 to 18 (VPTSSSSSAAT). Residues 20 to 32 (RQKDVDNKLEKCL) show a composition bias toward basic and acidic residues. Composition is skewed to low complexity over residues 40–53 (TSSNNNSTSNSNNN), 137–158 (QHQQQQHHQQQQQQHQEQQQYP), and 183–203 (MQQQHMPAHQQQQHLPHKLQQ). Residues 271-282 (HSASFSSAQRPT) are compositionally biased toward polar residues. Low complexity-rich tracts occupy residues 285 to 310 (QFHQQHQQQQHLQQQQQHPQQQQHQH), 347 to 365 (QMQPVKYQQQQQHPHTQFQ), and 396 to 419 (SSSSNKQPQQPQQQQQQQQSQLQQ). Residues 479–799 (YKIMATLGEG…LGEALHHPFF (321 aa)) enclose the Protein kinase domain. ATP-binding positions include 485 to 493 (LGEGTFGRV) and K508. The Proton acceptor role is filled by D605. The interval 809–832 (GEVSNKQPLSSGSSSRERSHSLSR) is disordered. Basic and acidic residues predominate over residues 823-832 (SRERSHSLSR).

Belongs to the protein kinase superfamily. CMGC Ser/Thr protein kinase family. Lammer subfamily. In terms of assembly, interacts (via N-terminus) with x16 (via Arg/Ser-rich region). Interacts with eEF1gamma (via C-terminus); the interaction is probably direct, is transient and leads to phosphorylation of eEF1gamma by Doa. Requires Mg(2+) as cofactor. Post-translationally, autophosphorylated on serine, threonine and tyrosine residues. As to expression, ubiquitous expression in embryos. Stage 17 embryos show elevated expression in CNS and brain. Ubiquitous expression in larval imaginal disks. Increased expression posterior to the eye-antennal disk morphogenetic furrow.

It localises to the cytoplasm. The protein resides in the cytosol. The protein localises to the nucleus. It catalyses the reaction L-seryl-[protein] + ATP = O-phospho-L-seryl-[protein] + ADP + H(+). The catalysed reaction is L-threonyl-[protein] + ATP = O-phospho-L-threonyl-[protein] + ADP + H(+). The enzyme catalyses L-tyrosyl-[protein] + ATP = O-phospho-L-tyrosyl-[protein] + ADP + H(+). Its function is as follows. Dual specificity kinase involved in the negative regulation of microtubule-based transport through phsophorylation of the microtuble-binding protein eEF1gamma. May function in the control of alternative splicing by phosphorylating serine/arginine-rich splicing factors, the SR proteins, including x16. Negative regulator of the copia retrotransposon element of the white (w) gene. In the eye, it is required for normal pigmentation, photoreceptor cell development and for organization of interommatidial bristles. Also essential for embryonic segmentation and differentiation of the nervous system. In terms of biological role, may be the specific isoform involved in regulation of microtubule-based transport through phosphorylation of the microtubule binding protein eEF1gamma. The polypeptide is Serine/threonine-protein kinase Doa (Drosophila melanogaster (Fruit fly)).